A 458-amino-acid chain; its full sequence is Bifunctional protein GlmU (458 aa).

The segment at 1 to 229 is pyrophosphorylase; sequence MTNYAIILAA…FNESLGVNDR (229 aa). UDP-N-acetyl-alpha-D-glucosamine contacts are provided by residues 8 to 11, lysine 22, glutamine 72, and 77 to 78; these read LAAG and GT. Residue aspartate 102 coordinates Mg(2+). The UDP-N-acetyl-alpha-D-glucosamine site is built by glycine 139, glutamate 154, asparagine 169, and asparagine 227. Asparagine 227 provides a ligand contact to Mg(2+). The tract at residues 230–250 is linker; the sequence is VALATAESVMRRRINKAHMIN. The N-acetyltransferase stretch occupies residues 251 to 458; sequence GVTFQNPDAT…AKRLPHYPQK (208 aa). Residues arginine 332 and lysine 350 each coordinate UDP-N-acetyl-alpha-D-glucosamine. The Proton acceptor role is filled by histidine 362. Residues tyrosine 365 and asparagine 376 each contribute to the UDP-N-acetyl-alpha-D-glucosamine site. Acetyl-CoA-binding positions include alanine 379, 385–386, serine 404, alanine 422, and arginine 439; that span reads NY.

This sequence in the N-terminal section; belongs to the N-acetylglucosamine-1-phosphate uridyltransferase family. The protein in the C-terminal section; belongs to the transferase hexapeptide repeat family. Homotrimer. Mg(2+) serves as cofactor.

The protein resides in the cytoplasm. It carries out the reaction alpha-D-glucosamine 1-phosphate + acetyl-CoA = N-acetyl-alpha-D-glucosamine 1-phosphate + CoA + H(+). It catalyses the reaction N-acetyl-alpha-D-glucosamine 1-phosphate + UTP + H(+) = UDP-N-acetyl-alpha-D-glucosamine + diphosphate. It functions in the pathway nucleotide-sugar biosynthesis; UDP-N-acetyl-alpha-D-glucosamine biosynthesis; N-acetyl-alpha-D-glucosamine 1-phosphate from alpha-D-glucosamine 6-phosphate (route II): step 2/2. It participates in nucleotide-sugar biosynthesis; UDP-N-acetyl-alpha-D-glucosamine biosynthesis; UDP-N-acetyl-alpha-D-glucosamine from N-acetyl-alpha-D-glucosamine 1-phosphate: step 1/1. The protein operates within bacterial outer membrane biogenesis; LPS lipid A biosynthesis. Catalyzes the last two sequential reactions in the de novo biosynthetic pathway for UDP-N-acetylglucosamine (UDP-GlcNAc). The C-terminal domain catalyzes the transfer of acetyl group from acetyl coenzyme A to glucosamine-1-phosphate (GlcN-1-P) to produce N-acetylglucosamine-1-phosphate (GlcNAc-1-P), which is converted into UDP-GlcNAc by the transfer of uridine 5-monophosphate (from uridine 5-triphosphate), a reaction catalyzed by the N-terminal domain. The polypeptide is Bifunctional protein GlmU (Streptococcus uberis (strain ATCC BAA-854 / 0140J)).